Here is a 171-residue protein sequence, read N- to C-terminus: Neuronal vesicle trafficking-associated protein 2 (171 aa).

The interval 1-21 (MVKLNGNPGEKGAKPPSVEDG) is disordered. Topologically, residues 1–71 (MVKLNGNPGE…FRVPKIAEFT (71 aa)) are cytoplasmic. The helical; Signal-anchor for type II membrane protein transmembrane segment at 72–92 (VTILVSLALAFLACIVFLVVY) threads the bilayer. At 93–171 (KAFTYDHSCP…EPKPPKTQGH (79 aa)) the chain is on the lumenal side.

Belongs to the NSG family.

Its subcellular location is the membrane. The protein resides in the golgi apparatus. The protein localises to the trans-Golgi network membrane. It is found in the cell projection. It localises to the dendrite. Its subcellular location is the endosome membrane. The protein resides in the early endosome membrane. The protein localises to the late endosome membrane. It is found in the lysosome lumen. It localises to the cytoplasmic vesicle membrane. Its subcellular location is the golgi stack membrane. The protein resides in the endosome. The protein localises to the multivesicular body membrane. In Rattus norvegicus (Rat), this protein is Neuronal vesicle trafficking-associated protein 2.